A 177-amino-acid chain; its full sequence is CDP-diacylglycerol--serine O-phosphatidyltransferase (177 aa).

The next 5 helical transmembrane spans lie at 4 to 24, 28 to 48, 77 to 97, 116 to 136, and 140 to 160; these read IPCMITIGNFICGLLAIHSLL, IHSAVLFIFTGMFLDFFDGMA, MLAYSVALYTLPFIGILCALT, LPTFIGMPIPFAGMCLVILSF, and PILLAIGTCGLSYLMVSKIKF.

Belongs to the CDP-alcohol phosphatidyltransferase class-I family.

The protein localises to the cell membrane. It carries out the reaction a CDP-1,2-diacyl-sn-glycerol + L-serine = a 1,2-diacyl-sn-glycero-3-phospho-L-serine + CMP + H(+). This chain is CDP-diacylglycerol--serine O-phosphatidyltransferase (pssA), found in Bacillus subtilis (strain 168).